Consider the following 343-residue polypeptide: N-acetyl-gamma-glutamyl-phosphate reductase (343 aa).

The active site involves Cys-146.

Belongs to the NAGSA dehydrogenase family. Type 1 subfamily.

The protein localises to the cytoplasm. The catalysed reaction is N-acetyl-L-glutamate 5-semialdehyde + phosphate + NADP(+) = N-acetyl-L-glutamyl 5-phosphate + NADPH + H(+). It participates in amino-acid biosynthesis; L-arginine biosynthesis; N(2)-acetyl-L-ornithine from L-glutamate: step 3/4. Functionally, catalyzes the NADPH-dependent reduction of N-acetyl-5-glutamyl phosphate to yield N-acetyl-L-glutamate 5-semialdehyde. In Paenarthrobacter aurescens (strain TC1), this protein is N-acetyl-gamma-glutamyl-phosphate reductase.